Here is a 193-residue protein sequence, read N- to C-terminus: Protein THEM6 (193 aa).

Residues 1–18 (MSWLVVLLILYVIWDVNY) form the signal peptide. Asn149 carries N-linked (GlcNAc...) asparagine glycosylation.

It belongs to the THEM6 family.

The protein localises to the secreted. This chain is Protein THEM6, found in Drosophila melanogaster (Fruit fly).